A 201-amino-acid chain; its full sequence is Lipopolysaccharide core heptose(II)-phosphate phosphatase (201 aa).

Positions 1–35 (MLAFILRFIKNKSYFALLAGAWVIIAGLTSQHAWS) are cleaved as a signal peptide.

Belongs to the phosphoglycerate mutase family. Ais subfamily.

It is found in the periplasm. It participates in bacterial outer membrane biogenesis; lipopolysaccharide metabolism. In terms of biological role, catalyzes the dephosphorylation of heptose(II) of the outer membrane lipopolysaccharide core. The polypeptide is Lipopolysaccharide core heptose(II)-phosphate phosphatase (Salmonella arizonae (strain ATCC BAA-731 / CDC346-86 / RSK2980)).